The following is a 681-amino-acid chain: Transmembrane protein 168-A (681 aa).

9 helical membrane passes run 16 to 36 (FLRC…CLGM), 47 to 67 (MILV…ILYY), 73 to 93 (SASL…LCFL), 135 to 155 (PVVI…ASIS), 156 to 176 (LVFD…ALII), 184 to 204 (LALP…FQSL), 252 to 272 (FSLF…AFKL), 281 to 301 (VIPG…VFLV), and 346 to 365 (LVLF…WQVA). The N-linked (GlcNAc...) asparagine glycan is linked to Asn517.

The protein belongs to the TMEM168 family.

Its subcellular location is the nucleus membrane. Functionally, plays a key role in maintaining the cardiac electrical stability by modulating cell surface expression of SCN5A. This Danio rerio (Zebrafish) protein is Transmembrane protein 168-A (tmem168a).